The chain runs to 480 residues: MVKICCIGAGYVGGPTMAVIALKCPAIEVVVVDISKPRIDAWNSEQLPIYEPGLDEVVKECRGRNLFFSTDVEKHVAEADIIFVSVNTPTKTRGLGAGKAADLTYWESAARMIADVSKSDKIVVEKSTVPVKTAEAIEKILTHNSKGINYQILSNPEFLAEGTAIDDLFKPDRVLIGGRETAEGRKAVQALKSVYAHWVPEDRIITTNLWSAELSKLAANAFLAQRISSVNAISALCEATGANVTEVAYAVGKDSRIGPKFLNASVGFGGSCFQKDILNLVYICECNGLPEVANYWKQVIKINDYQKSRFVNRVVSSMFNTVSGKKIAVLGFAFKKDTGDTRETPAIDVCHGLLGDKAQISIYDPQVTEDQIQRDLAMGKFDWDHPMHLQPTSPTAFKQVSVVWDAYEATKNAHGLCILTEWDEFKTLDYQKIYDNMQKPAFVFDGRNVVDPEKLREIGFIVYSIGKPLDAWLKDMPAVA.

NAD(+) contacts are provided by residues Gly-8 to Gly-13, Asp-33, Arg-38, Val-86 to Thr-90, Ser-127 to Thr-128, and Glu-161. Substrate contacts are provided by residues Glu-157 to Glu-161, Lys-216 to Leu-223, and Arg-256 to Gly-269. Cys-272 serves as the catalytic Nucleophile. Cys-272–Lys-275 serves as a coordination point for NAD(+). Phe-334 to Lys-335 contacts substrate. Position 342 (Arg-342) interacts with NAD(+). Ser-393 carries the post-translational modification Phosphoserine. Arg-447 serves as a coordination point for substrate.

It belongs to the UDP-glucose/GDP-mannose dehydrogenase family.

It catalyses the reaction UDP-alpha-D-glucose + 2 NAD(+) + H2O = UDP-alpha-D-glucuronate + 2 NADH + 3 H(+). It participates in nucleotide-sugar biosynthesis; UDP-alpha-D-glucuronate biosynthesis; UDP-alpha-D-glucuronate from UDP-alpha-D-glucose: step 1/1. Its function is as follows. Involved in the biosynthesis of UDP-glucuronic acid (UDP-GlcA), providing nucleotide sugars for cell-wall polymers. This is UDP-glucose 6-dehydrogenase 3 (UGD3) from Oryza sativa subsp. japonica (Rice).